The following is a 318-amino-acid chain: HPr kinase/phosphorylase (318 aa).

Active-site residues include H141 and K162. ATP is bound at residue 156–163; it reads GDSAMGKS. Position 163 (S163) interacts with Mg(2+). The active-site Proton acceptor; for phosphorylation activity. Proton donor; for dephosphorylation activity is D180. The important for the catalytic mechanism of both phosphorylation and dephosphorylation stretch occupies residues 204-213; that stretch reads LEVRGLGILN. Position 205 (E205) interacts with Mg(2+). The active site involves R248. The segment at 269–274 is important for the catalytic mechanism of dephosphorylation; sequence PVAAGR.

It belongs to the HPrK/P family. Homohexamer. Mg(2+) serves as cofactor.

It carries out the reaction [HPr protein]-L-serine + ATP = [HPr protein]-O-phospho-L-serine + ADP + H(+). The enzyme catalyses [HPr protein]-O-phospho-L-serine + phosphate + H(+) = [HPr protein]-L-serine + diphosphate. Its function is as follows. Catalyzes the ATP- as well as the pyrophosphate-dependent phosphorylation of a specific serine residue in HPr, a phosphocarrier protein of the phosphoenolpyruvate-dependent sugar phosphotransferase system (PTS). HprK/P also catalyzes the pyrophosphate-producing, inorganic phosphate-dependent dephosphorylation (phosphorolysis) of seryl-phosphorylated HPr (P-Ser-HPr). This chain is HPr kinase/phosphorylase, found in Chromobacterium violaceum (strain ATCC 12472 / DSM 30191 / JCM 1249 / CCUG 213 / NBRC 12614 / NCIMB 9131 / NCTC 9757 / MK).